The primary structure comprises 269 residues: Bifunctional protein FolD (269 aa).

NADP(+)-binding positions include 149–151 (GLG) and Val215.

This sequence belongs to the tetrahydrofolate dehydrogenase/cyclohydrolase family. Homodimer.

It carries out the reaction (6R)-5,10-methylene-5,6,7,8-tetrahydrofolate + NADP(+) = (6R)-5,10-methenyltetrahydrofolate + NADPH. The catalysed reaction is (6R)-5,10-methenyltetrahydrofolate + H2O = (6R)-10-formyltetrahydrofolate + H(+). It participates in one-carbon metabolism; tetrahydrofolate interconversion. Functionally, catalyzes the oxidation of 5,10-methylenetetrahydrofolate to 5,10-methenyltetrahydrofolate and then the hydrolysis of 5,10-methenyltetrahydrofolate to 10-formyltetrahydrofolate. This Mycoplasma pneumoniae (strain ATCC 29342 / M129 / Subtype 1) (Mycoplasmoides pneumoniae) protein is Bifunctional protein FolD.